We begin with the raw amino-acid sequence, 132 residues long: DNA-directed RNA polymerase subunit omega (132 aa).

A disordered region spans residues 76-105; the sequence is EVDEPEQDAASIAEGQLTSGSQDEDEMPET.

The protein belongs to the RNA polymerase subunit omega family. The RNAP catalytic core consists of 2 alpha, 1 beta, 1 beta' and 1 omega subunit. When a sigma factor is associated with the core the holoenzyme is formed, which can initiate transcription.

The catalysed reaction is RNA(n) + a ribonucleoside 5'-triphosphate = RNA(n+1) + diphosphate. Functionally, promotes RNA polymerase assembly. Latches the N- and C-terminal regions of the beta' subunit thereby facilitating its interaction with the beta and alpha subunits. The sequence is that of DNA-directed RNA polymerase subunit omega from Allorhizobium ampelinum (strain ATCC BAA-846 / DSM 112012 / S4) (Agrobacterium vitis (strain S4)).